Reading from the N-terminus, the 77-residue chain is U8-lycotoxin-Ls1v (77 aa).

The N-terminal stretch at 1–20 (MKLIIFTGLVLFGIVSLIEA) is a signal peptide. Positions 21-26 (QAENEK) are excised as a propeptide.

Belongs to the neurotoxin 19 (CSTX) family. 08 (U8-Lctx) subfamily. Post-translationally, contains 4 disulfide bonds. Expressed by the venom gland.

The protein localises to the secreted. The protein is U8-lycotoxin-Ls1v of Lycosa singoriensis (Wolf spider).